A 2238-amino-acid polypeptide reads, in one-letter code: Golgin subfamily A member 4 (2238 aa).

The tract at residues Met1–Arg90 is disordered. Position 10 is a phosphoserine (Ser10). The segment covering Glu12–Ser41 has biased composition (low complexity). Position 39 is a phosphothreonine (Thr39). Residue Ser41 is modified to Phosphoserine. 2 stretches are compositionally biased toward polar residues: residues Asn52 to Lys62 and Ser73 to Gln85. Phosphoserine is present on residues Ser93 and Ser100. 3 disordered regions span residues Ala132–Gly154, Leu1695–Cys1744, and Leu1770–Leu1789. The interval Gly154 to Lys224 is interaction with MACF1. Residues Ser156–Thr2161 are a coiled coil. The span at Leu1695–Asn1711 shows a compositional bias: basic and acidic residues. The region spanning Leu2178–Arg2225 is the GRIP domain.

Homodimer. Interacts with GTP-bound ARL1 and ARL3. Interacts with MACF1. Directly interacts with TBC1D23. Interacts with FAM91A1; this interaction may be mediated by TBC1D23. In terms of tissue distribution, ubiquitous. Highly expressed in oligodendrocyte precursors, particularly at a stage just prior to myelination.

The protein localises to the cytoplasm. Its subcellular location is the golgi apparatus membrane. It localises to the golgi apparatus. The protein resides in the trans-Golgi network membrane. Functionally, involved in vesicular trafficking at the Golgi apparatus level. May play a role in delivery of transport vesicles containing GPI-linked proteins from the trans-Golgi network through its interaction with MACF1. Involved in endosome-to-Golgi trafficking. In Mus musculus (Mouse), this protein is Golgin subfamily A member 4 (Golga4).